The sequence spans 323 residues: tRNA dimethylallyltransferase (323 aa).

16–23 (GPTASGKT) lines the ATP pocket. 18–23 (TASGKT) is a substrate binding site. Interaction with substrate tRNA stretches follow at residues 41 to 44 (DSAL), 165 to 169 (QRIQR), 253 to 258 (RCVGYR), and 286 to 293 (KRQITWLR).

Belongs to the IPP transferase family. As to quaternary structure, monomer. Requires Mg(2+) as cofactor.

The enzyme catalyses adenosine(37) in tRNA + dimethylallyl diphosphate = N(6)-dimethylallyladenosine(37) in tRNA + diphosphate. Its function is as follows. Catalyzes the transfer of a dimethylallyl group onto the adenine at position 37 in tRNAs that read codons beginning with uridine, leading to the formation of N6-(dimethylallyl)adenosine (i(6)A). The sequence is that of tRNA dimethylallyltransferase from Ralstonia nicotianae (strain ATCC BAA-1114 / GMI1000) (Ralstonia solanacearum).